We begin with the raw amino-acid sequence, 719 residues long: Protein borderless (719 aa).

Residues 1–33 (MPAKRSRTFRQSGSALLALLAIILLMNISCTSA) form the signal peptide. At 34–650 (ARDHRRQTNL…IDVPSQRKVR (617 aa)) the chain is on the extracellular side. 4 consecutive Ig-like domains span residues 40-128 (QTNL…CQVS), 134-241 (PSVR…AFLN), 246-334 (AKVI…PVIS), and 341-429 (PIFS…AELM). Intrachain disulfides connect Cys-55–Cys-125, Cys-172–Cys-224, Cys-267–Cys-318, and Cys-363–Cys-413. 2 Fibronectin type-III domains span residues 434–527 (APRA…TLPS) and 555–646 (APWN…VPSQ). The chain crosses the membrane as a helical span at residues 651-671 (ALIIGSSVGVIFLLCALCAFL). At 672–719 (YVKRSCLRHLFAKDSSASEDEDTAESGDCDSDEQDQRDRDSIKIRQST) the chain is on the cytoplasmic side. The tract at residues 685 to 719 (DSSASEDEDTAESGDCDSDEQDQRDRDSIKIRQST) is disordered. Residues 688 to 704 (ASEDEDTAESGDCDSDE) show a composition bias toward acidic residues. A compositionally biased stretch (basic and acidic residues) spans 705-719 (QDQRDRDSIKIRQST).

Belongs to the immunoglobulin superfamily. As to quaternary structure, interacts with tutl. As to expression, in the visual system, expressed in lamina and medulla (at protein level).

The protein localises to the cell membrane. The protein resides in the cell projection. It localises to the axon. In terms of biological role, in the developing eye, has a role in axonal targeting of the R7 photoreceptor where it functions together with tutl. Probably mediates homotypic cell adhesion; the effect is inhibited by Lar. The sequence is that of Protein borderless from Drosophila melanogaster (Fruit fly).